The following is a 444-amino-acid chain: Tol-Pal system protein TolB (444 aa).

The first 19 residues, Met1 to Ala19, serve as a signal peptide directing secretion.

The protein belongs to the TolB family. The Tol-Pal system is composed of five core proteins: the inner membrane proteins TolA, TolQ and TolR, the periplasmic protein TolB and the outer membrane protein Pal. They form a network linking the inner and outer membranes and the peptidoglycan layer.

It localises to the periplasm. Part of the Tol-Pal system, which plays a role in outer membrane invagination during cell division and is important for maintaining outer membrane integrity. In Rickettsia peacockii (strain Rustic), this protein is Tol-Pal system protein TolB.